The sequence spans 85 residues: Arminin 524 (85 aa).

An N-terminal signal peptide occupies residues 1 to 18 (MKAVFAILFLAFIALTYA). A propeptide spanning residues 19–57 (KSYDEVKEEIKNEVEREIFEDLEEESDELDNDVEEFNDA) is cleaved from the precursor. Residue Ala82 is modified to Alanine amide.

This sequence belongs to the arminin family. Expressed in entodermal epithelium along the body column.

It localises to the secreted. The protein localises to the target cell membrane. Its function is as follows. Antimicrobial peptide with a broad-spectrum antimicrobial activity. Keeps its antibacterial activity under a wide range of salt concentrations that mimic physiological conditions of human blood, which is surprising, since Hydra is an obligate freshwater animal with nearly no salt tolerance. Does not affect red blood cells. The protein is Arminin 524 of Hydra oligactis (Brown hydra).